A 76-amino-acid polypeptide reads, in one-letter code: Acyl carrier protein (76 aa).

In terms of domain architecture, Carrier spans 1-76 (MSIEERVKKI…SAIDYVQNNQ (76 aa)). Serine 36 is modified (O-(pantetheine 4'-phosphoryl)serine).

It belongs to the acyl carrier protein (ACP) family. Post-translationally, 4'-phosphopantetheine is transferred from CoA to a specific serine of apo-ACP by AcpS. This modification is essential for activity because fatty acids are bound in thioester linkage to the sulfhydryl of the prosthetic group.

It is found in the cytoplasm. It participates in lipid metabolism; fatty acid biosynthesis. In terms of biological role, carrier of the growing fatty acid chain in fatty acid biosynthesis. This Actinobacillus succinogenes (strain ATCC 55618 / DSM 22257 / CCUG 43843 / 130Z) protein is Acyl carrier protein.